The following is a 103-amino-acid chain: Phosphoribosyl-ATP pyrophosphatase (103 aa).

Residues serine 79 to leucine 103 form a disordered region. A compositionally biased stretch (basic and acidic residues) spans glutamate 83–leucine 103.

The protein belongs to the PRA-PH family.

Its subcellular location is the cytoplasm. It carries out the reaction 1-(5-phospho-beta-D-ribosyl)-ATP + H2O = 1-(5-phospho-beta-D-ribosyl)-5'-AMP + diphosphate + H(+). Its pathway is amino-acid biosynthesis; L-histidine biosynthesis; L-histidine from 5-phospho-alpha-D-ribose 1-diphosphate: step 2/9. The protein is Phosphoribosyl-ATP pyrophosphatase of Listeria welshimeri serovar 6b (strain ATCC 35897 / DSM 20650 / CCUG 15529 / CIP 8149 / NCTC 11857 / SLCC 5334 / V8).